Here is a 232-residue protein sequence, read N- to C-terminus: RNA chaperone ProQ (232 aa).

The disordered stretch occupies residues 105–182 (EAKARVQAQR…REEQHTPVSD (78 aa)). Residues 117–136 (QQAKKREAAAAAGEKEDAPR) are compositionally biased toward basic and acidic residues. A compositionally biased stretch (basic residues) spans 137-146 (RERKPRPTTP). Positions 147 to 177 (RRKEGAERKPRAQKPVEKAPKTVKAPREEQH) are enriched in basic and acidic residues.

The protein belongs to the ProQ family.

The protein localises to the cytoplasm. In terms of biological role, RNA chaperone with significant RNA binding, RNA strand exchange and RNA duplexing activities. May regulate ProP activity through an RNA-based, post-transcriptional mechanism. In Escherichia coli (strain ATCC 8739 / DSM 1576 / NBRC 3972 / NCIMB 8545 / WDCM 00012 / Crooks), this protein is RNA chaperone ProQ.